The primary structure comprises 178 residues: Large ribosomal subunit protein uL10 (178 aa).

The protein belongs to the universal ribosomal protein uL10 family. Part of the ribosomal stalk of the 50S ribosomal subunit. The N-terminus interacts with L11 and the large rRNA to form the base of the stalk. The C-terminus forms an elongated spine to which L12 dimers bind in a sequential fashion forming a multimeric L10(L12)X complex.

Forms part of the ribosomal stalk, playing a central role in the interaction of the ribosome with GTP-bound translation factors. The chain is Large ribosomal subunit protein uL10 from Mycobacterium tuberculosis (strain ATCC 25177 / H37Ra).